The primary structure comprises 388 residues: Pepsin A-2/A-3 (388 aa).

Positions 1-15 (MKWLLLLGLVALSEC) are cleaved as a signal peptide. 2 propeptides (activation peptide) span residues 16 to 40 (IIHKVPLVRKKSLRRNLSEHGLLKD) and 41 to 62 (FLKKHNFNPASKYFPQAEAPTL). Residues 76–385 (YFGTIGIGTP…DRANNQVGLA (310 aa)) enclose the Peptidase A1 domain. Residue Asp-94 is part of the active site. Residues Cys-107 and Cys-112 are joined by a disulfide bond. Ser-130 is subject to Phosphoserine. Cys-268 and Cys-272 are joined by a disulfide. Residue Asp-277 is part of the active site. Cys-311 and Cys-344 are oxidised to a cystine.

Belongs to the peptidase A1 family. Post-translationally, pepsin A-2 is phosphorylated, but not pepsin A-3. Each pepsinogen is converted to corresponding pepsin at pH 2.0 in part as a result of the release of a 47 AA activation segment and in part as a result of stepwise proteolytic cleavage via an intermediate form(s).

The protein resides in the secreted. The enzyme catalyses Preferential cleavage: hydrophobic, preferably aromatic, residues in P1 and P1' positions. Cleaves 1-Phe-|-Val-2, 4-Gln-|-His-5, 13-Glu-|-Ala-14, 14-Ala-|-Leu-15, 15-Leu-|-Tyr-16, 16-Tyr-|-Leu-17, 23-Gly-|-Phe-24, 24-Phe-|-Phe-25 and 25-Phe-|-Tyr-26 bonds in the B chain of insulin.. In terms of biological role, shows particularly broad specificity; although bonds involving phenylalanine and leucine are preferred, many others are also cleaved to some extent. This Macaca fuscata fuscata (Japanese macaque) protein is Pepsin A-2/A-3.